A 231-amino-acid chain; its full sequence is Large ribosomal subunit protein uL1 (231 aa).

This sequence belongs to the universal ribosomal protein uL1 family. Part of the 50S ribosomal subunit.

In terms of biological role, binds directly to 23S rRNA. The L1 stalk is quite mobile in the ribosome, and is involved in E site tRNA release. Its function is as follows. Protein L1 is also a translational repressor protein, it controls the translation of the L11 operon by binding to its mRNA. The sequence is that of Large ribosomal subunit protein uL1 from Staphylococcus epidermidis (strain ATCC 35984 / DSM 28319 / BCRC 17069 / CCUG 31568 / BM 3577 / RP62A).